A 469-amino-acid chain; its full sequence is ATP synthase subunit beta (469 aa).

156–163 is an ATP binding site; it reads GGAGVGKT.

It belongs to the ATPase alpha/beta chains family. As to quaternary structure, F-type ATPases have 2 components, CF(1) - the catalytic core - and CF(0) - the membrane proton channel. CF(1) has five subunits: alpha(3), beta(3), gamma(1), delta(1), epsilon(1). CF(0) has three main subunits: a(1), b(2) and c(9-12). The alpha and beta chains form an alternating ring which encloses part of the gamma chain. CF(1) is attached to CF(0) by a central stalk formed by the gamma and epsilon chains, while a peripheral stalk is formed by the delta and b chains.

The protein localises to the cell membrane. It carries out the reaction ATP + H2O + 4 H(+)(in) = ADP + phosphate + 5 H(+)(out). In terms of biological role, produces ATP from ADP in the presence of a proton gradient across the membrane. The catalytic sites are hosted primarily by the beta subunits. In Bacillus mycoides (strain KBAB4) (Bacillus weihenstephanensis), this protein is ATP synthase subunit beta.